The chain runs to 26 residues: uncharacterized protein (26 aa).

This is an uncharacterized protein from Archaeoglobus fulgidus (strain ATCC 49558 / DSM 4304 / JCM 9628 / NBRC 100126 / VC-16).